The sequence spans 145 residues: Peptide methionine sulfoxide reductase MsrB (145 aa).

One can recognise a MsrB domain in the interval 6 to 129 (KNERLKQLTD…NSAALRFIPV (124 aa)). The active-site Nucleophile is the Cys-118.

The protein belongs to the MsrB Met sulfoxide reductase family.

The enzyme catalyses L-methionyl-[protein] + [thioredoxin]-disulfide + H2O = L-methionyl-(R)-S-oxide-[protein] + [thioredoxin]-dithiol. In Listeria innocua serovar 6a (strain ATCC BAA-680 / CLIP 11262), this protein is Peptide methionine sulfoxide reductase MsrB.